Here is a 566-residue protein sequence, read N- to C-terminus: Transcription factor atf1 (566 aa).

Polar residues predominate over residues 1 to 42 (MSPSPVNTSTEPASVAAVSNGNATASSTQVPENNQSDSFAPP). Disordered regions lie at residues 1–83 (MSPS…FVGS), 96–117 (SFGS…PSLS), 315–345 (QQQT…PQAS), and 357–479 (SQQF…KSFL). Positions 43–53 (SNNSQQNQQSS) are enriched in low complexity. 2 stretches are compositionally biased toward polar residues: residues 65-76 (ANANPADQSDGV) and 97-106 (FGSTASVGQG). Over residues 107–117 (NPSLNRNPSLS) the composition is skewed to low complexity. Composition is skewed to polar residues over residues 379–412 (TLRQ…TANS) and 421–460 (TDYS…YSKG). Residues 466 to 479 (SKNETDEEKRKSFL) are compositionally biased toward basic and acidic residues. One can recognise a bZIP domain in the interval 472–535 (EEKRKSFLER…VSLKTLLIAH (64 aa)). Residues 474-503 (KRKSFLERNRQAALKCRQRKKQWLSNLQAK) form a basic motif region. Residues 514–528 (LSAQVSALREEIVSL) form a leucine-zipper region.

This sequence belongs to the bZIP family. In terms of assembly, heterodimer of pcr1/mts2 and atf1/mts1. In terms of processing, phosphorylated by sty1/spc1.

It localises to the nucleus. Functionally, transcription factor required for sexual development and entry into stationary phase. Binds and activates CRE sites (cAMP-response elements, also known as M26 meiotic recombination hotspots). This chain is Transcription factor atf1 (atf1), found in Schizosaccharomyces pombe (strain 972 / ATCC 24843) (Fission yeast).